Here is a 354-residue protein sequence, read N- to C-terminus: Ferrochelatase (354 aa).

2 residues coordinate Fe cation: histidine 214 and glutamate 295.

The protein belongs to the ferrochelatase family.

Its subcellular location is the cytoplasm. It carries out the reaction heme b + 2 H(+) = protoporphyrin IX + Fe(2+). It functions in the pathway porphyrin-containing compound metabolism; protoheme biosynthesis; protoheme from protoporphyrin-IX: step 1/1. Its function is as follows. Catalyzes the ferrous insertion into protoporphyrin IX. This is Ferrochelatase from Burkholderia ambifaria (strain MC40-6).